Reading from the N-terminus, the 423-residue chain is Gamma-glutamyl phosphate reductase (423 aa).

It belongs to the gamma-glutamyl phosphate reductase family.

The protein localises to the cytoplasm. It catalyses the reaction L-glutamate 5-semialdehyde + phosphate + NADP(+) = L-glutamyl 5-phosphate + NADPH + H(+). Its pathway is amino-acid biosynthesis; L-proline biosynthesis; L-glutamate 5-semialdehyde from L-glutamate: step 2/2. Its function is as follows. Catalyzes the NADPH-dependent reduction of L-glutamate 5-phosphate into L-glutamate 5-semialdehyde and phosphate. The product spontaneously undergoes cyclization to form 1-pyrroline-5-carboxylate. The chain is Gamma-glutamyl phosphate reductase from Desulfovibrio desulfuricans (strain ATCC 27774 / DSM 6949 / MB).